The following is a 445-amino-acid chain: Cyclic GMP-AMP synthase-like receptor 1 (445 aa).

Mg(2+) is bound by residues E70, D72, and D186. Position 70–72 (70–72) interacts with ATP; sequence EYD. GTP-binding positions include D186 and 232-239; that span reads RTSFYEAE. Residues 236–239, K257, and 270–274 contribute to the ATP site; these read YEAE and SYHIK. The interval 357 to 445 is disordered; the sequence is LNDDNENSVH…KSKTTTPKPS (89 aa). Residues 377-398 show a composition bias toward basic and acidic residues; the sequence is QKMEKTSTESEQKKPTETKPNA. Low complexity predominate over residues 435 to 445; it reads TKSKTTTPKPS.

The protein belongs to the mab-21 family. The cofactor is Mg(2+). Mn(2+) is required as a cofactor.

It catalyses the reaction GTP + ATP = 3',2'-cGAMP + 2 diphosphate. The catalysed reaction is GTP + ATP = pppA(2'-5')pG + diphosphate. It carries out the reaction pppA(2'-5')pG = 3',2'-cGAMP + diphosphate. The enzyme activity is specifically activated by double-stranded RNA (dsRNA). Nucleotidyltransferase that catalyzes the formation of cyclic GMP-AMP (3',2'-cGAMP) from ATP and GTP and plays a key role in innate immunity. Synthesizes 3',2'-cGAMP in a two-step reaction through production of the linear intermediate pppA(2'-5')pG. Acts as a key sensor of double-stranded RNA (dsRNA), the presence of dsRNA in the cytoplasm being a danger signal that triggers the immune responses. Directly binds dsRNA, activating the nucleotidyltransferase activity, leading to synthesis of 3',2'-cGAMP, a second messenger that binds to and activates Sting, thereby triggering the antiviral immune response via activation of the NF-kappa-B transcription factor Rel (Relish). This Drosophila erecta (Fruit fly) protein is Cyclic GMP-AMP synthase-like receptor 1.